Here is a 146-residue protein sequence, read N- to C-terminus: Ribonuclease H (146 aa).

The RNase H type-1 domain occupies M1–Q143. Mg(2+) contacts are provided by D10, E48, D70, and D135.

Belongs to the RNase H family. As to quaternary structure, monomer. Mg(2+) serves as cofactor.

The protein resides in the cytoplasm. The catalysed reaction is Endonucleolytic cleavage to 5'-phosphomonoester.. Functionally, endonuclease that specifically degrades the RNA of RNA-DNA hybrids. The chain is Ribonuclease H from Chlorobium luteolum (strain DSM 273 / BCRC 81028 / 2530) (Pelodictyon luteolum).